A 289-amino-acid chain; its full sequence is 4-hydroxy-3-methylbut-2-enyl diphosphate reductase (289 aa).

Position 13 (Cys13) interacts with [4Fe-4S] cluster. His41 and His75 together coordinate (2E)-4-hydroxy-3-methylbut-2-enyl diphosphate. 2 residues coordinate dimethylallyl diphosphate: His41 and His75. 2 residues coordinate isopentenyl diphosphate: His41 and His75. Cys97 is a [4Fe-4S] cluster binding site. A (2E)-4-hydroxy-3-methylbut-2-enyl diphosphate-binding site is contributed by His129. His129 is a dimethylallyl diphosphate binding site. His129 provides a ligand contact to isopentenyl diphosphate. Glu131 (proton donor) is an active-site residue. Position 167 (Thr167) interacts with (2E)-4-hydroxy-3-methylbut-2-enyl diphosphate. Cys198 contributes to the [4Fe-4S] cluster binding site. 4 residues coordinate (2E)-4-hydroxy-3-methylbut-2-enyl diphosphate: Ser226, Ser227, Asn228, and Ser270. Positions 226, 227, 228, and 270 each coordinate dimethylallyl diphosphate. Isopentenyl diphosphate contacts are provided by Ser226, Ser227, Asn228, and Ser270.

Belongs to the IspH family. It depends on [4Fe-4S] cluster as a cofactor.

It catalyses the reaction isopentenyl diphosphate + 2 oxidized [2Fe-2S]-[ferredoxin] + H2O = (2E)-4-hydroxy-3-methylbut-2-enyl diphosphate + 2 reduced [2Fe-2S]-[ferredoxin] + 2 H(+). It carries out the reaction dimethylallyl diphosphate + 2 oxidized [2Fe-2S]-[ferredoxin] + H2O = (2E)-4-hydroxy-3-methylbut-2-enyl diphosphate + 2 reduced [2Fe-2S]-[ferredoxin] + 2 H(+). The protein operates within isoprenoid biosynthesis; dimethylallyl diphosphate biosynthesis; dimethylallyl diphosphate from (2E)-4-hydroxy-3-methylbutenyl diphosphate: step 1/1. It participates in isoprenoid biosynthesis; isopentenyl diphosphate biosynthesis via DXP pathway; isopentenyl diphosphate from 1-deoxy-D-xylulose 5-phosphate: step 6/6. Catalyzes the conversion of 1-hydroxy-2-methyl-2-(E)-butenyl 4-diphosphate (HMBPP) into a mixture of isopentenyl diphosphate (IPP) and dimethylallyl diphosphate (DMAPP). Acts in the terminal step of the DOXP/MEP pathway for isoprenoid precursor biosynthesis. The protein is 4-hydroxy-3-methylbut-2-enyl diphosphate reductase of Bacteroides thetaiotaomicron (strain ATCC 29148 / DSM 2079 / JCM 5827 / CCUG 10774 / NCTC 10582 / VPI-5482 / E50).